Reading from the N-terminus, the 351-residue chain is Heat-inducible transcription repressor HrcA (351 aa).

This sequence belongs to the HrcA family.

Its function is as follows. Negative regulator of class I heat shock genes (grpE-dnaK-dnaJ and groELS operons). Prevents heat-shock induction of these operons. The chain is Heat-inducible transcription repressor HrcA from Mycoplasma pneumoniae (strain ATCC 29342 / M129 / Subtype 1) (Mycoplasmoides pneumoniae).